Here is a 424-residue protein sequence, read N- to C-terminus: 3-ketoacyl-CoA thiolase A, peroxisomal (424 aa).

Residues 1 to 26 (MHRLQVVLGHLAGRPESSSALQAAPC) constitute a peroxisome transit peptide. The interval 1 to 26 (MHRLQVVLGHLAGRPESSSALQAAPC) is PTS2-type peroxisomal targeting signal. The Acyl-thioester intermediate role is filled by Cys-123. N6-acetyllysine occurs at positions 173 and 234. Catalysis depends on proton acceptor residues His-377 and Cys-408.

This sequence belongs to the thiolase-like superfamily. Thiolase family. Homodimer. Interacts (via PTS2-type peroxisomal targeting signal region) with PEX7; leading to its translocation into peroxisomes. In terms of tissue distribution, mainly expressed in liver and intestine.

Its subcellular location is the peroxisome. It carries out the reaction an acyl-CoA + acetyl-CoA = a 3-oxoacyl-CoA + CoA. It catalyses the reaction 2 acetyl-CoA = acetoacetyl-CoA + CoA. The catalysed reaction is tetradecanoyl-CoA + acetyl-CoA = 3-oxohexadecanoyl-CoA + CoA. The enzyme catalyses hexanoyl-CoA + acetyl-CoA = 3-oxooctanoyl-CoA + CoA. It carries out the reaction 3-oxohexadecanedioyl-CoA + CoA = tetradecanedioyl-CoA + acetyl-CoA. It catalyses the reaction 3-oxo-(6Z,9Z,12Z,15Z,18Z,21Z)-tetracosahexaenoyl-CoA + CoA = (4Z,7Z,10Z,13Z,16Z,19Z)-docosahexaenoyl-CoA + acetyl-CoA. The protein operates within lipid metabolism; peroxisomal fatty acid beta-oxidation. In terms of biological role, responsible for the thiolytic cleavage of straight chain 3-keto fatty acyl-CoAs (3-oxoacyl-CoAs). Plays an important role in fatty acid peroxisomal beta-oxidation. Catalyzes the cleavage of short, medium, long, and very long straight chain 3-oxoacyl-CoAs. The protein is 3-ketoacyl-CoA thiolase A, peroxisomal of Mus musculus (Mouse).